The sequence spans 400 residues: Enoyl-[acyl-carrier-protein] reductase [NADH] (400 aa).

Residues 48–53, 74–75, 111–112, and 139–140 each bind NAD(+); these read GSSSGY, FE, DA, and LA. Tyr-225 contributes to the substrate binding site. The active-site Proton donor is the Tyr-235. Residues Lys-244 and 273–275 each bind NAD(+); that span reads VVT.

Belongs to the TER reductase family. Monomer.

The catalysed reaction is a 2,3-saturated acyl-[ACP] + NAD(+) = a (2E)-enoyl-[ACP] + NADH + H(+). It functions in the pathway lipid metabolism; fatty acid biosynthesis. Functionally, involved in the final reduction of the elongation cycle of fatty acid synthesis (FAS II). Catalyzes the reduction of a carbon-carbon double bond in an enoyl moiety that is covalently linked to an acyl carrier protein (ACP). In Shewanella piezotolerans (strain WP3 / JCM 13877), this protein is Enoyl-[acyl-carrier-protein] reductase [NADH].